We begin with the raw amino-acid sequence, 97 residues long: Small ribosomal subunit protein bS6 (97 aa).

It belongs to the bacterial ribosomal protein bS6 family.

Binds together with bS18 to 16S ribosomal RNA. The protein is Small ribosomal subunit protein bS6 of Limosilactobacillus fermentum (strain NBRC 3956 / LMG 18251) (Lactobacillus fermentum).